The chain runs to 60 residues: Putative mercuric resistance protein (60 aa).

This is Putative mercuric resistance protein from Pseudomonas aeruginosa.